The chain runs to 939 residues: Probable importin ECU10_0620 (939 aa).

An Importin N-terminal domain is found at 23-90 (AEAMLMDLEK…VENILDLFLY (68 aa)).

This sequence belongs to the importin beta family.

The protein localises to the nucleus. It is found in the cytoplasm. Active in protein import into the nucleus. The protein is Probable importin ECU10_0620 of Encephalitozoon cuniculi (strain GB-M1) (Microsporidian parasite).